The chain runs to 1029 residues: Protein SUPPRESSOR OF PHYA-105 1 (1029 aa).

The segment at 42–69 (SETANSDCPGSSAHRNVDLTKPPPPEEA) is disordered. Residues 188 to 529 (VQMKTPVSSS…ARDILKSELI (342 aa)) form the Protein kinase domain. Residues 194 to 202 (VSSSNFSQL) and K216 contribute to the ATP site. Positions 213-269 (VVGKNQETPPEFVSDQDLGSKEKKLDISKSPTPHDVLPLKSSPKGNGMVSHGDGNHS) are disordered. Residues 230–239 (LGSKEKKLDI) are compositionally biased toward basic and acidic residues. Catalysis depends on D316, which acts as the Proton acceptor. A disordered region spans residues 347 to 392 (EDLNRRRPVVEESSSGGRDSKKRKMDLHLNSPGNQLQATSTGRPFK). Polar residues predominate over residues 377–388 (SPGNQLQATSTG). Positions 557–589 (VQKKKKASKLLQDIQTLEDDIKEAERRYSSNVS) form a coiled coil. The interval 653-679 (ARSDKTLKDRDRCSENQNENQDMSTKG) is disordered. Basic and acidic residues predominate over residues 654–666 (RSDKTLKDRDRCS). The segment covering 667–679 (ENQNENQDMSTKG) has biased composition (polar residues). WD repeat units follow at residues 714 to 753 (NSASVVCSLSFDPDEEHIAAAGISKKIKIFDFNAFMNESV), 763 to 803 (VNKS…GFSQ), 806 to 846 (EHQK…SLGT), 848 to 888 (WSPA…TPWC), 892 to 930 (GHEKAVSYVKFMDSETIVSASTDNSLKLWNLNKTNSSGL), 932 to 971 (PGACSLTYKGHTNQKNFVGLSVLDGYIACGSETNEVYSYY), and 997 to 1029 (DNGQFVSSVCWRKKSNMLVAANSTGNMKLLKLV). The short motif at 866–881 (LAFGSADYKVYCYDLR) is the DWD box element.

As to quaternary structure, interacts with CO, COP1, HFR1, HY5 and PHYA. Light induces dissociation of the SPA1/COP1 complex. Binds to CRY1 in response to blue light, this interaction prevents SPA1/COP1 complex formation but stimulate CRY2/COP1 complex, and thus avoid COP1-dependent degradation of the transcription factor HY5 by the proteasome and promotes hypocotyl elongation.

The protein localises to the nucleus speckle. It is found in the nucleus. It localises to the PML body. Controls normal photoperiodic flowering and regulates circadian rhythms. Required for suppression of photomorphogenesis in dark-grown seedlings and for normal elongation growth of adult plants. Integral component of the COP1/SPA E3 ubiquitin-protein ligase complex. Involved in HY5, HFR1, LAF1 and CO degradation. In Arabidopsis thaliana (Mouse-ear cress), this protein is Protein SUPPRESSOR OF PHYA-105 1 (SPA1).